The primary structure comprises 125 residues: Fluoride-specific ion channel FluC (125 aa).

Helical transmembrane passes span 4 to 24, 35 to 55, 68 to 88, and 100 to 120; these read IALV…VGVW, WGTL…VELV, FLVT…LDAV, and AFYI…GLAL. Residues Gly-75 and Thr-78 each contribute to the Na(+) site.

The protein belongs to the fluoride channel Fluc/FEX (TC 1.A.43) family.

The protein resides in the cell inner membrane. The enzyme catalyses fluoride(in) = fluoride(out). Its activity is regulated as follows. Na(+) is not transported, but it plays an essential structural role and its presence is essential for fluoride channel function. Fluoride-specific ion channel. Important for reducing fluoride concentration in the cell, thus reducing its toxicity. This is Fluoride-specific ion channel FluC from Agrobacterium fabrum (strain C58 / ATCC 33970) (Agrobacterium tumefaciens (strain C58)).